An 86-amino-acid polypeptide reads, in one-letter code: Chymotrypsin inhibitor (86 aa).

The N-terminal stretch at 1–16 (MKTLCIFLVLVVAVAA) is a signal peptide. 4 disulfide bridges follow: C26–C58, C38–C50, C42–C82, and C60–C76. Residues 26–82 (CPPNKEFGSYGDCPPSCLKNPPNFCTLKLNYGCKCKEGYVLTRYQDYESDCIKPEEC) enclose the TIL domain.

It belongs to the serine protease inhibitor-like (TIL domain-containing) family. In terms of tissue distribution, only expressed in fat body.

It localises to the secreted. Serine protease inhibitor that inhibits chymotrypsin (IC(50)=34.13 nM, Ki=49.85 nM), microbial serine proteases (subtilisin A (IC(50)=21.31 nM, Ki=20.51 nM) and proteinase K (IC(50)=52.56 nM, Ki=65.42 nM)), as well as human neutrophil elastase (IC(50)=11.54 nM, Ki=8.74 nM), and porcine pancreatic elastase (IC(50)=19.07 nM, Ki=11.32 nM). This chain is Chymotrypsin inhibitor, found in Araneus ventricosus (Orbweaver spider).